The following is a 596-amino-acid chain: Aspartate--tRNA(Asp/Asn) ligase (596 aa).

Glutamate 175 lines the L-aspartate pocket. Positions 199 to 202 are aspartate; the sequence is QMFK. The L-aspartate site is built by arginine 221 and histidine 451. Residue 221-223 participates in ATP binding; sequence RDE. Glutamate 485 contributes to the ATP binding site. Position 492 (arginine 492) interacts with L-aspartate. Residue 537-540 participates in ATP binding; it reads GVDR.

Belongs to the class-II aminoacyl-tRNA synthetase family. Type 1 subfamily. Homodimer.

The protein localises to the cytoplasm. It carries out the reaction tRNA(Asx) + L-aspartate + ATP = L-aspartyl-tRNA(Asx) + AMP + diphosphate. Functionally, aspartyl-tRNA synthetase with relaxed tRNA specificity since it is able to aspartylate not only its cognate tRNA(Asp) but also tRNA(Asn). Reaction proceeds in two steps: L-aspartate is first activated by ATP to form Asp-AMP and then transferred to the acceptor end of tRNA(Asp/Asn). This is Aspartate--tRNA(Asp/Asn) ligase from Zymomonas mobilis subsp. mobilis (strain ATCC 31821 / ZM4 / CP4).